A 121-amino-acid polypeptide reads, in one-letter code: Flagellar hook-basal body complex protein FliE (121 aa).

It belongs to the FliE family.

Its subcellular location is the bacterial flagellum basal body. The chain is Flagellar hook-basal body complex protein FliE from Treponema denticola (strain ATCC 35405 / DSM 14222 / CIP 103919 / JCM 8153 / KCTC 15104).